We begin with the raw amino-acid sequence, 287 residues long: Immunoglobulin alpha Fc receptor (287 aa).

The signal sequence occupies residues 1-21 (MDPKQTTLLCLVLCLGQRIQA). The Extracellular segment spans residues 22 to 227 (QEGDFPMPFI…SIHQDYTTQN (206 aa)). Ig-like C2-type domains lie at 42–107 (DGSV…IGHY) and 139–200 (GENI…YNRS). The cysteines at positions 49 and 100 are disulfide-linked. 5 N-linked (GlcNAc...) asparagine glycosylation sites follow: Asn-65, Asn-79, Asn-141, Asn-177, and Asn-186. Cys-146 and Cys-193 are disulfide-bonded. Residues 228-246 (LIRMAVAGLVLVALLAILV) traverse the membrane as a helical segment. At 247-287 (ENWHSHTALNKEASADVAEPSWSQQMCQPGLTFARTPSVCK) the chain is on the cytoplasmic side.

Associates with the Fc epsilon RI gamma 2 receptor inducing tyrosine phosphorylation of gamma 2. As to quaternary structure, (Microbial infection) Interacts with Staphylococcus aureus protein SSL11. In terms of tissue distribution, isoform A.1, isoform A.2 and isoform A.3 are differentially expressed between blood and mucosal myeloid cells. Isoform A.1, isoform A.2 and isoform A.3 are expressed in monocytes. Isoform A.1 and isoform A.2 are expressed in alveolar macrophages; however only one isoform is expressed at alveolar macrophages surfaces.

It is found in the cell membrane. The protein resides in the secreted. Its function is as follows. Binds to the Fc region of immunoglobulins alpha. Mediates several functions including cytokine production. The chain is Immunoglobulin alpha Fc receptor (FCAR) from Homo sapiens (Human).